We begin with the raw amino-acid sequence, 96 residues long: DNA/RNA-binding protein Alba (96 aa).

Belongs to the histone-like Alba family.

It is found in the cytoplasm. The protein localises to the chromosome. Binds double-stranded DNA tightly but without sequence specificity. Involved in DNA compaction. The sequence is that of DNA/RNA-binding protein Alba from Methanocella arvoryzae (strain DSM 22066 / NBRC 105507 / MRE50).